A 105-amino-acid polypeptide reads, in one-letter code: Large ribosomal subunit protein eL36 (105 aa).

The interval Met1–Ser36 is disordered. Basic residues predominate over residues Arg27–Ser36.

Belongs to the eukaryotic ribosomal protein eL36 family. As to quaternary structure, component of the large ribosomal subunit (LSU).

The protein localises to the cytoplasm. Its function is as follows. Component of the ribosome, a large ribonucleoprotein complex responsible for the synthesis of proteins in the cell. The small ribosomal subunit (SSU) binds messenger RNAs (mRNAs) and translates the encoded message by selecting cognate aminoacyl-transfer RNA (tRNA) molecules. The large subunit (LSU) contains the ribosomal catalytic site termed the peptidyl transferase center (PTC), which catalyzes the formation of peptide bonds, thereby polymerizing the amino acids delivered by tRNAs into a polypeptide chain. The nascent polypeptides leave the ribosome through a tunnel in the LSU and interact with protein factors that function in enzymatic processing, targeting, and the membrane insertion of nascent chains at the exit of the ribosomal tunnel. The polypeptide is Large ribosomal subunit protein eL36 (Emericella nidulans (strain FGSC A4 / ATCC 38163 / CBS 112.46 / NRRL 194 / M139) (Aspergillus nidulans)).